The primary structure comprises 61 residues: Sec-independent protein translocase protein TatA (61 aa).

The helical transmembrane segment at 2–22 (GLSGISPLSLLLILAIIVALF) threads the bilayer.

It belongs to the TatA/E family. In terms of assembly, the Tat system comprises two distinct complexes: a TatABC complex, containing multiple copies of TatA, TatB and TatC subunits, and a separate TatA complex, containing only TatA subunits. Substrates initially bind to the TatABC complex, which probably triggers association of the separate TatA complex to form the active translocon.

It is found in the cell inner membrane. Its function is as follows. Part of the twin-arginine translocation (Tat) system that transports large folded proteins containing a characteristic twin-arginine motif in their signal peptide across membranes. TatA could form the protein-conducting channel of the Tat system. In Legionella pneumophila (strain Corby), this protein is Sec-independent protein translocase protein TatA.